Consider the following 159-residue polypeptide: Ribosome-binding factor A (159 aa).

Basic and acidic residues-rich tracts occupy residues 118–128 and 137–146; these read AADDEVAKARE and DPYKEPRVAS. The interval 118 to 159 is disordered; it reads AADDEVAKARENAQPAGDADPYKEPRVASDEDEASPDVREAD.

This sequence belongs to the RbfA family. Monomer. Binds 30S ribosomal subunits, but not 50S ribosomal subunits or 70S ribosomes.

It localises to the cytoplasm. Functionally, one of several proteins that assist in the late maturation steps of the functional core of the 30S ribosomal subunit. Associates with free 30S ribosomal subunits (but not with 30S subunits that are part of 70S ribosomes or polysomes). Required for efficient processing of 16S rRNA. May interact with the 5'-terminal helix region of 16S rRNA. This Rhodococcus erythropolis (strain PR4 / NBRC 100887) protein is Ribosome-binding factor A.